We begin with the raw amino-acid sequence, 536 residues long: Putative beta-xylosidase (536 aa).

The active-site Proton acceptor is Asp-14. Residue Glu-186 is the Proton donor of the active site.

Belongs to the glycosyl hydrolase 43 family.

It catalyses the reaction Hydrolysis of (1-&gt;4)-beta-D-xylans, to remove successive D-xylose residues from the non-reducing termini.. This is Putative beta-xylosidase (yagH) from Escherichia coli (strain K12).